The sequence spans 426 residues: Serine--tRNA ligase (426 aa).

Residue 231 to 233 coordinates L-serine; that stretch reads TSE. Residue 262–264 participates in ATP binding; sequence RSE. E285 contacts L-serine. ATP is bound at residue 349–352; it reads EISS. S385 provides a ligand contact to L-serine.

Belongs to the class-II aminoacyl-tRNA synthetase family. Type-1 seryl-tRNA synthetase subfamily. Homodimer. The tRNA molecule binds across the dimer.

It is found in the cytoplasm. The catalysed reaction is tRNA(Ser) + L-serine + ATP = L-seryl-tRNA(Ser) + AMP + diphosphate + H(+). It catalyses the reaction tRNA(Sec) + L-serine + ATP = L-seryl-tRNA(Sec) + AMP + diphosphate + H(+). The protein operates within aminoacyl-tRNA biosynthesis; selenocysteinyl-tRNA(Sec) biosynthesis; L-seryl-tRNA(Sec) from L-serine and tRNA(Sec): step 1/1. Functionally, catalyzes the attachment of serine to tRNA(Ser). Is also able to aminoacylate tRNA(Sec) with serine, to form the misacylated tRNA L-seryl-tRNA(Sec), which will be further converted into selenocysteinyl-tRNA(Sec). This is Serine--tRNA ligase from Legionella pneumophila (strain Corby).